The primary structure comprises 352 residues: Cysteinyl leukotriene receptor 1 (352 aa).

Residues 1–43 lie on the Extracellular side of the membrane; it reads MYLQGTKQTFLENMNGTENLTTSLINNTCHDTIDEFRNQVYST. N-linked (GlcNAc...) asparagine glycosylation is found at Asn-15, Asn-19, and Asn-26. Residues 44-64 traverse the membrane as a helical segment; it reads MYSVISVVGFFGNSFVLYVLI. The Cytoplasmic segment spans residues 65 to 72; that stretch reads KTYHEKSA. A helical membrane pass occupies residues 73 to 93; the sequence is FQVYMINLAIADLLCVCTLPL. Over 94 to 121 the chain is Extracellular; the sequence is RVVYYVHKGKWLFGDFLCRLTTYALYVN. Cys-111 and Cys-188 are disulfide-bonded. Residues 122 to 142 traverse the membrane as a helical segment; sequence LYCSIFFMTAMSFFRCVAIVF. Residues 143 to 156 are Cytoplasmic-facing; sequence PVQNINLVTQKKAR. Residues 157–177 form a helical membrane-spanning segment; that stretch reads FVCIGIWIFVILTSSPFLMYK. Residues 178 to 208 lie on the Extracellular side of the membrane; sequence SYQDEKNNTKCFEPPQNNQAKKYVLILHYVS. N-linked (GlcNAc...) asparagine glycosylation is present at Asn-184. Residues 209 to 229 form a helical membrane-spanning segment; it reads LFFGFIIPFVTIIVCYTMIIL. The Cytoplasmic segment spans residues 230–245; sequence TLLKNTMKKNMPSRRK. Residues 246-266 form a helical membrane-spanning segment; sequence AIGMIIVVTAAFLVSFMPYHI. The Extracellular portion of the chain corresponds to 267–291; the sequence is QRTIHLHLLHSETRPCDSVLRMQKS. The chain crosses the membrane as a helical span at residues 292-312; it reads VVITLSLAASNCCFDPLLYFF. The Cytoplasmic segment spans residues 313–352; that stretch reads SGGNFRRRLSTFRKHSLSSMTYVPKKKASLPEKGEEICNE.

The protein belongs to the G-protein coupled receptor 1 family. In terms of tissue distribution, widely expressed, with higher expression in the lung and skin, intermediate levels in the heart, kidney and stomach and lower levels in several other tissues. Isoform 1 is the most abundant form in all tested tissues.

The protein localises to the cell membrane. In terms of biological role, receptor for cysteinyl leukotrienes mediating constriction of the microvascular smooth muscle during an inflammatory response. This response is mediated via a G-protein that activates a phosphatidylinositol-calcium second messenger system. The rank order of affinities for the leukotrienes is LTD4 &gt;&gt; LTE4 = LTC4 &gt;&gt; LTB4. The chain is Cysteinyl leukotriene receptor 1 (Cysltr1) from Mus musculus (Mouse).